The chain runs to 473 residues: Ornithine decarboxylase (473 aa).

An N6-(pyridoxal phosphate)lysine modification is found at lysine 106. Residues serine 240, glycine 277, and 313-316 each bind pyridoxal 5'-phosphate; that span reads EPGR. 367 to 368 lines the substrate pocket; that stretch reads FD. Cysteine 417 serves as the catalytic Proton donor; shared with dimeric partner. Aspartate 418 is a binding site for substrate. Tyrosine 447 serves as a coordination point for pyridoxal 5'-phosphate.

The protein belongs to the Orn/Lys/Arg decarboxylase class-II family. As to quaternary structure, homodimer. Only the dimer is catalytically active, as the active sites are constructed of residues from both monomers. Pyridoxal 5'-phosphate is required as a cofactor.

It is found in the cytoplasm. The catalysed reaction is L-ornithine + H(+) = putrescine + CO2. Its pathway is amine and polyamine biosynthesis; putrescine biosynthesis via L-ornithine pathway; putrescine from L-ornithine: step 1/1. With respect to regulation, inhibited by antizyme (AZ) OAZ1 in response to polyamine levels. AZ inhibits the assembly of the functional homodimer by binding to ODC monomers and targeting them for ubiquitin-independent proteolytic destruction by the 26S proteasome. Functionally, catalyzes the first and rate-limiting step of polyamine biosynthesis that converts ornithine into putrescine, which is the precursor for the polyamines, spermidine and spermine. Polyamines are essential for cell proliferation and are implicated in cellular processes, ranging from DNA replication to apoptosis. The chain is Ornithine decarboxylase (SPE1) from Candida albicans (strain SC5314 / ATCC MYA-2876) (Yeast).